A 384-amino-acid chain; its full sequence is Mannitol-1-phosphate 5-dehydrogenase (384 aa).

An NAD(+)-binding site is contributed by Ala3–Gly14.

It belongs to the mannitol dehydrogenase family. As to quaternary structure, monomer.

It catalyses the reaction D-mannitol 1-phosphate + NAD(+) = beta-D-fructose 6-phosphate + NADH + H(+). The sequence is that of Mannitol-1-phosphate 5-dehydrogenase (mtlD) from Enterococcus faecalis (strain ATCC 700802 / V583).